Here is a 388-residue protein sequence, read N- to C-terminus: Beta-1,4-galactosyltransferase 5 (388 aa).

At 1–14 (MRARRGLLRLPRRS) the chain is on the cytoplasmic side. The helical; Signal-anchor for type II membrane protein transmembrane segment at 15-35 (LLAALFFFSLSSSLLYFVYVA) threads the bilayer. The Lumenal segment spans residues 36 to 388 (PGIVNTYLFM…TPELAQVTEY (353 aa)). 4 N-linked (GlcNAc...) asparagine glycosylation sites follow: N77, N81, N90, and N128. C114 and C158 form a disulfide bridge. UDP-alpha-D-galactose is bound by residues 169-173 (PFRNR), 208-210 (FNR), 235-236 (VD), Y264, and W296. An intrachain disulfide couples C229 to C248. D236 is a binding site for Mn(2+). N-acetyl-D-glucosamine is bound at residue 298–301 (GEDD). H329 contacts Mn(2+). 329–330 (HH) provides a ligand contact to UDP-alpha-D-galactose. R340 is a binding site for N-acetyl-D-glucosamine. N-linked (GlcNAc...) asparagine glycans are attached at residues N360, N364, and N373.

It belongs to the glycosyltransferase 7 family. The cofactor is Mn(2+). Highest levels in heart, brain, liver and kidney with lower levels in spleen, lung and testis.

It is found in the golgi apparatus. It localises to the golgi stack membrane. The enzyme catalyses a beta-D-glucosyl-(1&lt;-&gt;1')-N-acylsphing-4-enine + UDP-alpha-D-galactose = a beta-D-Gal-(1-&gt;4)-beta-D-Glc-(1&lt;-&gt;1)-Cer(d18:1(4E)) + UDP + H(+). The protein operates within protein modification; protein glycosylation. Its pathway is sphingolipid metabolism. Functionally, catalyzes the synthesis of lactosylceramide (LacCer) via the transfer of galactose from UDP-galactose to glucosylceramide (GlcCer). LacCer is the starting point in the biosynthesis of all gangliosides (membrane-bound glycosphingolipids) which play pivotal roles in the CNS including neuronal maturation and axonal and myelin formation. Plays a role in the glycosylation of BMPR1A and regulation of its protein stability. Essential for extraembryonic development during early embryogenesis. The polypeptide is Beta-1,4-galactosyltransferase 5 (Mus musculus (Mouse)).